The following is a 521-amino-acid chain: Solute carrier family 35 member F4 (521 aa).

10 consecutive transmembrane segments (helical) span residues 160–180 (MVLKGIWGLLIILSVSSSWVG), 192–212 (FYCPFFMTWFSTNWNIMFFPV), 248–266 (FLKRTAPFSILWTLTNYLY), 277–297 (DVSALFCCNKAFVFLLSWIVL), 301–321 (FMGVRIVAAIMAITGIVMMAY), 330–350 (IIGVAFAVGSASTSALYKVLF), 365–385 (FVSTLGFFNLIFISFTPVILY), 395–417 (FAALPWGCLCGMAGLWLAFNILV), 419–441 (VGVVLTYPILISIGTVLSVPGNA), and 450–470 (VIFNVVRLAATIIICIGFLLM). Residues 261 to 321 (LTNYLYLLAL…AITGIVMMAY (61 aa)) enclose the EamA domain.

The protein belongs to the SLC35F solute transporter family.

The protein resides in the membrane. In terms of biological role, putative solute transporter. The sequence is that of Solute carrier family 35 member F4 (SLC35F4) from Homo sapiens (Human).